Consider the following 335-residue polypeptide: Trans-3-hydroxy-L-proline dehydratase (335 aa).

C91 acts as the Proton acceptor in catalysis. Substrate is bound by residues 92-93 (GH) and 256-257 (GS).

The protein belongs to the proline racemase family. In terms of assembly, homodimer.

It catalyses the reaction trans-3-hydroxy-L-proline = 1-pyrroline-2-carboxylate + H2O. It functions in the pathway amino-acid degradation. Its function is as follows. Catalyzes the dehydration of trans-3-hydroxy-L-proline (t3LHyp) to Delta(1)-pyrroline-2-carboxylate (Pyr2C). Together with LhpI, is involved in a t3LHyp degradation pathway to L-proline, which allows A.brasilense to grow on t3LHyp as a sole carbon source. In Azospirillum brasilense, this protein is Trans-3-hydroxy-L-proline dehydratase.